We begin with the raw amino-acid sequence, 377 residues long: MSVLFTILLMAVIGGFIGAMTNYIAIRMLFRPYKAIYLFNKRLPFTPGLIPKRRDELAEHIGKVVVSHLLTEDAIRARLLDENLQKEITDTITKMFHEKMQLETTPNELLHHFGYENAEIRSMAWIEKTMEKEINHFLSTKKTTKMSDLIPTMLESELTTKLPHVTERITSKMALFVASEEGKSQIKQMLQKFFEEHGKMGSMARMFINVDSFSEKIQQEGLKLIDQEDTKNLINQLLTTEWKNFEAKELQELIPTEKQVHLAGQLTSELIQTFPHEKLFNQPIQVILRNYETTIVEKVIPFAVERMLDFVATHSAEIVERMDLAKLVETQIATFSLPEIEKLVVEISGRELKMITYLGGILGGFIGVIQGILAMWI.

Transmembrane regions (helical) follow at residues 1–21 and 357–377; these read MSVL…GAMT and YLGG…AMWI.

The protein belongs to the UPF0754 family.

The protein resides in the cell membrane. In Listeria monocytogenes serotype 4a (strain HCC23), this protein is UPF0754 membrane protein LMHCC_0318.